The following is a 38-amino-acid chain: Non-specific lipid-transfer protein P2 (38 aa).

The protein belongs to the plant LTP family.

The protein localises to the secreted. In terms of biological role, plant non-specific lipid-transfer proteins transfer phospholipids as well as galactolipids across membranes. May play a role in wax or cutin deposition in the cell walls of expanding epidermal cells and certain secretory tissues. This chain is Non-specific lipid-transfer protein P2, found in Vitis sp. (Grape).